The sequence spans 629 residues: tRNA uridine 5-carboxymethylaminomethyl modification enzyme MnmG (629 aa).

13–18 (GGGHAG) is an FAD binding site. 273–287 (GPRYCPSIEDKIVRF) contributes to the NAD(+) binding site.

This sequence belongs to the MnmG family. Homodimer. Heterotetramer of two MnmE and two MnmG subunits. FAD is required as a cofactor.

It localises to the cytoplasm. NAD-binding protein involved in the addition of a carboxymethylaminomethyl (cmnm) group at the wobble position (U34) of certain tRNAs, forming tRNA-cmnm(5)s(2)U34. The protein is tRNA uridine 5-carboxymethylaminomethyl modification enzyme MnmG of Marinomonas sp. (strain MWYL1).